We begin with the raw amino-acid sequence, 125 residues long: Small ribosomal subunit protein bS6 (125 aa).

It belongs to the bacterial ribosomal protein bS6 family.

Binds together with bS18 to 16S ribosomal RNA. This chain is Small ribosomal subunit protein bS6, found in Campylobacter jejuni (strain RM1221).